The following is a 445-amino-acid chain: Exodeoxyribonuclease 7 large subunit (445 aa).

Belongs to the XseA family. In terms of assembly, heterooligomer composed of large and small subunits.

Its subcellular location is the cytoplasm. The catalysed reaction is Exonucleolytic cleavage in either 5'- to 3'- or 3'- to 5'-direction to yield nucleoside 5'-phosphates.. In terms of biological role, bidirectionally degrades single-stranded DNA into large acid-insoluble oligonucleotides, which are then degraded further into small acid-soluble oligonucleotides. The polypeptide is Exodeoxyribonuclease 7 large subunit (Staphylococcus epidermidis (strain ATCC 12228 / FDA PCI 1200)).